Consider the following 1070-residue polypeptide: uncharacterized protein (1070 aa).

Residues 477–523 (LIDTNQLLLRQLQQIVKLGIFNEKKIKEELKANKFNEQVALQILESE) form the UBA domain.

This is an uncharacterized protein from Sulfolobus islandicus rod-shaped virus 1 (SIRV-1).